A 452-amino-acid polypeptide reads, in one-letter code: Autophagy-related protein 32 (452 aa).

The disordered stretch occupies residues 1–28; that stretch reads MSTKSQVTRRVRTSIATPEDGVHGNNQH. Residues 336–356 traverse the membrane as a helical segment; it reads WAIWTASFTIGIGIGCCISLM.

Belongs to the ATG32 family.

It is found in the mitochondrion outer membrane. It localises to the vacuole membrane. Its subcellular location is the preautophagosomal structure membrane. Its function is as follows. Mitophagy-specific receptor that recruits the autophagic machinery to mitochondria and regulates selective degradation of mitochondria. Mitophagy contributes to regulate mitochondrial quantity and quality by eliminating the mitochondria to a basal level to fulfill cellular energy requirements and preventing excess ROS production. Recruits ATG11 to the surface of mitochondria. Also promotes autophagy-dependent peroxisome degradation. This is Autophagy-related protein 32 (ATG32) from Eremothecium gossypii (strain ATCC 10895 / CBS 109.51 / FGSC 9923 / NRRL Y-1056) (Yeast).